The primary structure comprises 925 residues: SGGFDFSFLPQPPQEKAHDGGRYYGVGLGPGPMGLMGPRGPPGASGAPGPQGFQGPAGEPGEPGQTGPAGARGPAGPPGKAGGVVGPQGARGFPGTPGLPGFKGIRGHNGLDGLKGQPGAQGVKGEPGAPGENGTPGQTGARGLPGERGRRGSDGSVGPVGPAGPIGSAGPPGFPGAPGPKGELGPVGNTGPAGPAGPRGEQGLPGVSGPVGPPGNPGANGLTGKGAAGLPGVAGAPGLPGPRGIPGPVGASGATGARGLVGEPGPAGSKGESGGKGEPGSAGPQGPPGSSGEEGKRSTGPTGPPGLRGGPGSRGLPGADGRRGPSGDTGRPGEPGLMGARGLPGSPGNVGPAGKEGPGLPGIDGRPGPIGPAGARGEAGNIGFPGPKGPAGDPGGHAGLAGNRGAPGPDGNNGAQGPPGLQGVQGGKGEQGPAGPPGFQGLPGPAGTTGEAGKPGERGIPGEFGLPGPAGPRGERGPPGESGAVGPSGAIGSRGPSGPPGPDGNKGEPGVVGAPGTAGPAGSGGLPGERGAAGIPGGKGEKGETGLRGEVGTTGRDGARGAPGAVGAPGPAGATGDRGEAGAAGPAGPAGPRGSPGERGEVGPAGPNGFAGPAGAAGQPGAKGERGTKGPKGENGIVGPTGPVGSAGPAGPNGPAGPAGSRGDGGPPGVTGFPGAAGRTGPPGPSGITGPPGPPGAAGKGDQGPVGRGETGAGGPPGFTGEKGPSGEPGTAGPPGTAGPQGLLGAPGILGLPGSRGERGLPGVAGAVGEPGPLGIGPPGARGGKHGNRGEPGPVGSVGPVGALGPRGPSGPQGIRGDKGEPGEKGPRGLPGGLQGLPGLAGQHGDQGSPGPVGPAGPRGPAGPSGPPGKDGRTGHPGAVGPAGIRGSQGSQGPSGPAGPPGPPGPPGASGGGYDFGYEGDFYRA.

Residues 1–925 (SGGFDFSFLP…FGYEGDFYRA (925 aa)) are disordered. 4-hydroxyproline is present on residues Pro-10 and Pro-13. The span at 22–34 (RYYGVGLGPGPMG) shows a compositional bias: gly residues. Residues 35–74 (LMGPRGPPGASGAPGPQGFQGPAGEPGEPGQTGPAGARGP) show a composition bias toward low complexity. Pro-42 and Pro-48 each carry 4-hydroxyproline. Lys-103 is modified (5-hydroxylysine; alternate). O-linked (Gal...) hydroxylysine; alternate glycosylation is present at Lys-103. Residues 154–171 (DGSVGPVGPAGPIGSAGP) are compositionally biased toward low complexity. A compositionally biased stretch (gly residues) spans 271–280 (GESGGKGEPG). Over residues 281–291 (SAGPQGPPGSS) the composition is skewed to low complexity. Over residues 306-315 (GLRGGPGSRG) the composition is skewed to gly residues. 4-hydroxyproline is present on residues Pro-317, Pro-332, and Pro-335. Residues 363–379 (IDGRPGPIGPAGARGEA) are compositionally biased toward low complexity. Gly residues predominate over residues 423 to 432 (GVQGGKGEQG). Low complexity-rich tracts occupy residues 479–496 (PGESGAVGPSGAIGSRGP) and 508–518 (EPGVVGAPGTA). Over residues 519-528 (GPAGSGGLPG) the composition is skewed to gly residues. 2 stretches are compositionally biased toward low complexity: residues 551-595 (VGTT…PRGS) and 602-622 (VGPAGPNGFAGPAGAAGQPGA). The span at 623-632 (KGERGTKGPK) shows a compositional bias: basic and acidic residues. Low complexity predominate over residues 640–650 (PTGPVGSAGPA). The span at 660 to 669 (GSRGDGGPPG) shows a compositional bias: gly residues. Residues 671–680 (TGFPGAAGRT) are compositionally biased toward low complexity. Over residues 696–718 (GAAGKGDQGPVGRGETGAGGPPG) the composition is skewed to gly residues. Composition is skewed to low complexity over residues 719–753 (FTGEKGPSGEPGTAGPPGTAGPQGLLGAPGILGLP) and 761–771 (LPGVAGAVGEP). Residues 772–782 (GPLGIGPPGAR) show a composition bias toward gly residues. The span at 791-806 (EPGPVGSVGPVGALGP) shows a compositional bias: low complexity. A compositionally biased stretch (basic and acidic residues) spans 816–827 (RGDKGEPGEKGP). The span at 897–907 (PAGPPGPPGPP) shows a compositional bias: pro residues.

Belongs to the fibrillar collagen family. In terms of assembly, trimers of one alpha 2(I) and two alpha 1(I) chains. Interacts (via C-terminus) with TMEM131 (via PapD-L domain); the interaction is direct and is involved in assembly and TRAPPIII ER-to-Golgi transport complex-dependent secretion of collagen. Prolines at the third position of the tripeptide repeating unit (G-X-Y) are hydroxylated in some or all of the chains. As to expression, expressed in bones.

The protein resides in the secreted. It is found in the extracellular space. Its subcellular location is the extracellular matrix. Functionally, type I collagen is a member of group I collagen (fibrillar forming collagen). This Acratocnus sp. (strain SLP-2019) (Ground sloth) protein is Collagen alpha-2(I) chain.